A 446-amino-acid chain; its full sequence is Tol-Pal system protein TolB (446 aa).

The signal sequence occupies residues 1–24; the sequence is MKRAFLSALSVGLAALFLTGPAQA.

This sequence belongs to the TolB family. The Tol-Pal system is composed of five core proteins: the inner membrane proteins TolA, TolQ and TolR, the periplasmic protein TolB and the outer membrane protein Pal. They form a network linking the inner and outer membranes and the peptidoglycan layer.

The protein resides in the periplasm. Functionally, part of the Tol-Pal system, which plays a role in outer membrane invagination during cell division and is important for maintaining outer membrane integrity. The chain is Tol-Pal system protein TolB from Dinoroseobacter shibae (strain DSM 16493 / NCIMB 14021 / DFL 12).